The sequence spans 248 residues: MGKRDNRVAYMNPIAMARWRGPTQSVGPTIQDYLNRPRPTWEEVKKQLENKKTGSKALAEFEEKMNENWKKELEKSREKLLSGNESSSKKRERKKKRKKKSCRSSSSSSSSDSSSSSSDSEDEEKKQGKRRKKKKNRSYKSSQSSTHESESESKESVKKKKKSKDETEKEKDVRSLSKKRKKSYPDDKPLSSESSSESDYEEDVQAKKKRRCEEREQAKEKVKKKKKKQHKKHSKKKKKKSGSSHKSR.

The span at 68-80 (NWKKELEKSREKL) shows a compositional bias: basic and acidic residues. The segment at 68-248 (NWKKELEKSR…KKSGSSHKSR (181 aa)) is disordered. Residues 90-102 (KRERKKKRKKKSC) show a composition bias toward basic residues. Positions 103-118 (RSSSSSSSSDSSSSSS) are enriched in low complexity. The span at 127 to 138 (QGKRRKKKKNRS) shows a compositional bias: basic residues. 3 stretches are compositionally biased toward basic and acidic residues: residues 147 to 156 (HESESESKES), 163 to 175 (SKDE…DVRS), and 211 to 220 (RCEEREQAKE). Residues 221–248 (KVKKKKKKQHKKHSKKKKKKSGSSHKSR) are compositionally biased toward basic residues.

The protein belongs to the FAM133 family.

In Homo sapiens (Human), this protein is Protein FAM133A (FAM133A).